Here is a 347-residue protein sequence, read N- to C-terminus: MSENSIRLTQYSHGAGCGCKISPKVLETILHSEQAKFVDPNLLVGNETRDDAAVYDLGNGTSVISTTDFFMPIVDNPFDFGRIAATNAISDIFAMGGKPIMAIAILGWPINKLSPEIAREVTEGGRYACRQAGIALAGGHSIDAPEPIFGLAVTGIVPTERVKKNSTAQAGCKLFLTKPLGIGVLTTAEKKSLLKPEHQGLATEVMCRMNIAGASFANIEGVKAMTDVTGFGLLGHLSEMCQGAGVQARVDYDAIPKLPGVEEYIKLGAVPGGTERNFASYGHLMGEMPREVRDLLCDPQTSGGLLLAVMPEAENEVKTTAAEFGIELTAIGELVPARGGRAMVEIR.

Residue Cys17 is part of the active site. ATP-binding positions include Lys20 and 48–50 (TRD). Asp51 lines the Mg(2+) pocket. ATP is bound by residues Asp68, Asp91, and 139–141 (GHS). Asp91 provides a ligand contact to Mg(2+). A Mg(2+)-binding site is contributed by Asp227.

Belongs to the selenophosphate synthase 1 family. Class I subfamily. Homodimer. The cofactor is Mg(2+).

It catalyses the reaction hydrogenselenide + ATP + H2O = selenophosphate + AMP + phosphate + 2 H(+). In terms of biological role, synthesizes selenophosphate from selenide and ATP. The protein is Selenide, water dikinase of Escherichia coli O139:H28 (strain E24377A / ETEC).